We begin with the raw amino-acid sequence, 160 residues long: MARAGNSLISHGRVAENRRARHDYSIEETIEAGLILVGTEVKSLRTGRANIADSYAGPKSGELYLYNAYIPDWTQAVKAFAHEPRQPRKLLVHRREARRLISAINKDGMTLVPLYLYFNDRGFAKVQLGLAKGRKAHDKRQAIKEREWNRDKARVLRDKG.

This sequence belongs to the SmpB family.

The protein localises to the cytoplasm. Required for rescue of stalled ribosomes mediated by trans-translation. Binds to transfer-messenger RNA (tmRNA), required for stable association of tmRNA with ribosomes. tmRNA and SmpB together mimic tRNA shape, replacing the anticodon stem-loop with SmpB. tmRNA is encoded by the ssrA gene; the 2 termini fold to resemble tRNA(Ala) and it encodes a 'tag peptide', a short internal open reading frame. During trans-translation Ala-aminoacylated tmRNA acts like a tRNA, entering the A-site of stalled ribosomes, displacing the stalled mRNA. The ribosome then switches to translate the ORF on the tmRNA; the nascent peptide is terminated with the 'tag peptide' encoded by the tmRNA and targeted for degradation. The ribosome is freed to recommence translation, which seems to be the essential function of trans-translation. The sequence is that of SsrA-binding protein from Rhodospirillum rubrum (strain ATCC 11170 / ATH 1.1.1 / DSM 467 / LMG 4362 / NCIMB 8255 / S1).